We begin with the raw amino-acid sequence, 425 residues long: COP9 signalosome complex subunit 1 (425 aa).

The region spanning 219 to 379 (ASSGVPPEIY…KSKALQTLEN (161 aa)) is the PCI domain.

This sequence belongs to the CSN1 family. As to quaternary structure, component of the COP9 signalosome (CSN) complex.

Its subcellular location is the cytoplasm. The protein resides in the nucleus. Its function is as follows. Component of the COP9 signalosome (CSN) complex that acts as an regulator of the ubiquitin (Ubl) conjugation pathway by mediating the deneddylation of the cullin subunit of SCF-type E3 ubiquitin-protein ligase complexes. The CSN complex is involved in the regulation of the circadian clock through its control of the stability of the SCF(FWD-1) complex. The sequence is that of COP9 signalosome complex subunit 1 (csn-1) from Neurospora crassa (strain ATCC 24698 / 74-OR23-1A / CBS 708.71 / DSM 1257 / FGSC 987).